The following is a 689-amino-acid chain: UvrABC system protein B (689 aa).

The interval 1–26 (MSDASGPLQPDRPEADVPFRVEAPFD) is disordered. The Helicase ATP-binding domain occupies 40-422 (AGYEQGAQQQ…ERAQSANVVE (383 aa)). 53-60 (GVTGSGKT) is an ATP binding site. The short motif at 106-129 (YYNYYQPEAYVEQTDKYIEKDASI) is the Beta-hairpin element. The region spanning 443 to 605 (QVEDLMDRID…TTPTTIEKAV (163 aa)) is the Helicase C-terminal domain. The UVR domain maps to 632-667 (ALLVEDLEARMEDAASNLEFELAADIRDRMRELREA). Residues 668–689 (FDLDGGDAPEDPGGVAPETEDW) are disordered.

Belongs to the UvrB family. As to quaternary structure, forms a heterotetramer with UvrA during the search for lesions. Interacts with UvrC in an incision complex.

It localises to the cytoplasm. In terms of biological role, the UvrABC repair system catalyzes the recognition and processing of DNA lesions. A damage recognition complex composed of 2 UvrA and 2 UvrB subunits scans DNA for abnormalities. Upon binding of the UvrA(2)B(2) complex to a putative damaged site, the DNA wraps around one UvrB monomer. DNA wrap is dependent on ATP binding by UvrB and probably causes local melting of the DNA helix, facilitating insertion of UvrB beta-hairpin between the DNA strands. Then UvrB probes one DNA strand for the presence of a lesion. If a lesion is found the UvrA subunits dissociate and the UvrB-DNA preincision complex is formed. This complex is subsequently bound by UvrC and the second UvrB is released. If no lesion is found, the DNA wraps around the other UvrB subunit that will check the other stand for damage. The polypeptide is UvrABC system protein B (Halobacterium salinarum (strain ATCC 700922 / JCM 11081 / NRC-1) (Halobacterium halobium)).